The sequence spans 1040 residues: MSLLKMRRHAIHSSDSTSSSSSEDDCFERRTKRNRNRAINRCLPLNFRKDEIRGIYKDRMKIGASLADVDPMQLDTSVRFDSVGGLSSHIAALKEMVVFPLLYPEVFEKFKIQPPRGCLFYGPPGTGKTLVARALANECSRGDKRVAFFMRKGADCLSKWVGESERQLRLLFDQAYQMRPAIIFFDEIDGLAPVRSSRQDQIHSSIVSTLLALMDGLDSRGEIVVIGATNRLDSIDPALRRPGRFDREFLFSLPDKNARKEILKIHTRDWNPKPVDMFLEELAEHCVGYCGADIKSICAEAALCALRRRYPQIYTTSEKLQLDLSSITISAKDFEAALQKIRPASQRAVTSPGQALSAIVKPLLQNTVHRILDALQKVFPHVEVGTNKSLNSDVSCPFLESDLAYSDDDTPSVYENGLSQKENLNFLHLNRNACYQPMSFRPRLLIVGEPGFGQSSHLAPAVIHALEKFTVYTLDIPVLFGISTTSPEEACSQMIREAKRTAPSIVYVPHIHLWWEIVGPTLKATFTTLLQTIPSFAPVLLLATSEKPYSALPEEVQELFTHDYGEIFNVQLPDKEERTKFFEDLILKQASKPPVSQKKAVLQALEVLPVAPPPEPRPLTAEEVKRLEEQEEDTFRELRIFLRNVTHRLAIDKRFRVFTKPVDPDEVPDYVTVIKQPMDLSSVISKIDLHKYLTVKDYLKDIDLICSNALEYNPDRDPGDRLIRHRACALRDTAYAIIKEELDEDFEQLCEEIQESRKKRGCSSSKYAPSYYHVMPKQNSPPVGDKKPDQEQNEKLKVPCTPVACSTPAQLKRKFHKKSKWHVGTKIKRRKISQAKDNSLNAMNSSSRSDTEDSQHTHAEHTEPGNTDESSVEESDKQNRLESNIDLKNNSSSSNIENELEEPKETTEGTELRKDRIVCRGDASASQVTDIPEDSESKEMDFLRMTLARGSQVEQQELISMEQALAILSQPTPSLVLDHKQLTNILKTVVKKSQKYNIFQLENLYAVISQCIYEHRRDYDKTALVQKMEQAVENFNCSRS.

Basic residues predominate over residues Met-1–Ile-11. Residues Met-1–Arg-30 form a disordered region. Position 65 is a phosphoserine (Ser-65). Gly-122–Thr-129 contacts ATP. 2 positions are modified to phosphoserine: Ser-401 and Ser-406. Coiled coils occupy residues Leu-619–Arg-643 and Tyr-735–Gly-761. Residues Glu-629–Glu-741 form the Bromo domain. The interval Tyr-772–Pro-799 is disordered. Glycyl lysine isopeptide (Lys-Gly) (interchain with G-Cter in SUMO2) cross-links involve residues Lys-777 and Lys-797. Positions Gly-784–Lys-797 are enriched in basic and acidic residues. A phosphothreonine mark is found at Thr-801 and Thr-825. Positions Leu-811–Ser-833 are enriched in basic residues. Residues Leu-811 to Ser-935 form a disordered region. Polar residues predominate over residues Ala-835–Arg-848. A phosphoserine mark is found at Ser-849, Ser-883, and Ser-891. Composition is skewed to basic and acidic residues over residues Ser-849–Glu-863 and Glu-874–Ile-885. Residues Glu-901–Cys-919 are compositionally biased toward basic and acidic residues. A Phosphoserine modification is found at Ser-951. The residue at position 972 (Thr-972) is a Phosphothreonine.

It belongs to the AAA ATPase family. Interacts with ESR1 and NCOA3 and these interactions are enhanced by estradiol. Interacts with acetylated lysine residues on histone H1.4, H2A, H2B and H3 (in vitro).

Its subcellular location is the nucleus. The catalysed reaction is ATP + H2O = ADP + phosphate + H(+). In terms of biological role, may be a transcriptional coactivator of the nuclear receptor ESR1 required to induce the expression of a subset of estradiol target genes, such as CCND1, MYC and E2F1. May play a role in the recruitment or occupancy of CREBBP at some ESR1 target gene promoters. May be required for histone hyperacetylation. The polypeptide is ATPase family AAA domain-containing protein 2 (Atad2) (Mus musculus (Mouse)).